The chain runs to 400 residues: Serine/threonine transporter SstT (400 aa).

The next 9 helical transmembrane spans lie at 14 to 34 (IIIA…VTPY), 48 to 68 (SVAP…FQVG), 76 to 96 (VLLL…IASL), 136 to 156 (AISE…GLAM), 177 to 197 (IIHK…AVTF), 211 to 231 (LLAV…PILV), 285 to 305 (IPLG…VLTL), 311 to 331 (LGIH…TISA), and 349 to 371 (CSLF…IISV).

This sequence belongs to the dicarboxylate/amino acid:cation symporter (DAACS) (TC 2.A.23) family.

It localises to the cell inner membrane. It catalyses the reaction L-serine(in) + Na(+)(in) = L-serine(out) + Na(+)(out). It carries out the reaction L-threonine(in) + Na(+)(in) = L-threonine(out) + Na(+)(out). In terms of biological role, involved in the import of serine and threonine into the cell, with the concomitant import of sodium (symport system). The polypeptide is Serine/threonine transporter SstT (Acinetobacter baumannii (strain ATCC 17978 / DSM 105126 / CIP 53.77 / LMG 1025 / NCDC KC755 / 5377)).